A 214-amino-acid chain; its full sequence is Uridine kinase (214 aa).

15-22 (GASASGKS) contacts ATP.

The protein belongs to the uridine kinase family.

It localises to the cytoplasm. The enzyme catalyses uridine + ATP = UMP + ADP + H(+). It catalyses the reaction cytidine + ATP = CMP + ADP + H(+). The protein operates within pyrimidine metabolism; CTP biosynthesis via salvage pathway; CTP from cytidine: step 1/3. It functions in the pathway pyrimidine metabolism; UMP biosynthesis via salvage pathway; UMP from uridine: step 1/1. The polypeptide is Uridine kinase (Aeromonas hydrophila subsp. hydrophila (strain ATCC 7966 / DSM 30187 / BCRC 13018 / CCUG 14551 / JCM 1027 / KCTC 2358 / NCIMB 9240 / NCTC 8049)).